The following is a 245-amino-acid chain: tRNA pseudouridine synthase A (245 aa).

The Nucleophile role is filled by Asp52. Position 111 (Tyr111) interacts with substrate.

The protein belongs to the tRNA pseudouridine synthase TruA family. Homodimer.

The enzyme catalyses uridine(38/39/40) in tRNA = pseudouridine(38/39/40) in tRNA. In terms of biological role, formation of pseudouridine at positions 38, 39 and 40 in the anticodon stem and loop of transfer RNAs. The protein is tRNA pseudouridine synthase A of Rickettsia peacockii (strain Rustic).